A 280-amino-acid chain; its full sequence is 4-deoxy-L-threo-5-hexosulose-uronate ketol-isomerase 1 (280 aa).

Zn(2+) contacts are provided by histidine 198, histidine 200, glutamate 205, and histidine 247.

This sequence belongs to the KduI family. Zn(2+) is required as a cofactor.

The catalysed reaction is 5-dehydro-4-deoxy-D-glucuronate = 3-deoxy-D-glycero-2,5-hexodiulosonate. The protein operates within glycan metabolism; pectin degradation; 2-dehydro-3-deoxy-D-gluconate from pectin: step 4/5. Functionally, catalyzes the isomerization of 5-dehydro-4-deoxy-D-glucuronate to 3-deoxy-D-glycero-2,5-hexodiulosonate. This chain is 4-deoxy-L-threo-5-hexosulose-uronate ketol-isomerase 1 (kduI1), found in Rhizobium meliloti (strain 1021) (Ensifer meliloti).